A 3072-amino-acid polypeptide reads, in one-letter code: Platelet binding protein GspB (3072 aa).

An N-terminal signal peptide occupies residues 1–85 (MFFKRQKGQY…AVLGGAVVTS (85 aa)). Disordered stretches follow at residues 117 to 147 (EAAT…SASS), 182 to 254 (SESL…APNV), 876 to 909 (SAST…SVSA), 936 to 969 (SAST…SVSA), 1024 to 2085 (SASV…SVSA), 2106 to 2139 (SAST…SVSA), 2173 to 2223 (VSAS…SVSA), 2250 to 2595 (SAST…SVSA), 2625 to 2965 (TSAS…NASV), and 3014 to 3045 (SQSL…GESE). The segment covering 118–127 (AATTLSSTEA) has biased composition (polar residues). The tract at residues 123–236 (SSTEANPVES…SSQQSTEASS (114 aa)) is ser-rich region 1 (SSR1). Low complexity-rich tracts occupy residues 131–147 (ESLS…SASS) and 182–238 (SESL…SSQT). Residues 237–603 (QTGRRRTRRA…GSKFIDTRAG (367 aa)) form a basic region (BR) region. Residues 604–3028 (SISKSQSTSN…ESQSSSASQS (2425 aa)) are ser-rich region 2 (SSR2). Positions 3014 to 3028 (SQSLSESQSSSASQS) are enriched in low complexity. Residues 3038 to 3042 (LPRTG) carry the LPXTG sorting signal motif. Residue Thr3041 is modified to Pentaglycyl murein peptidoglycan amidated threonine. A propeptide spans 3042–3072 (GESENKASILALGLGALGLAFKKRKKNESED) (removed by sortase).

Belongs to the serine-rich repeat protein (SRRP) family. Both SSR domains in the unglycosylated protein bind to Asp2 and Asp3; glycosylated protein binds less well. Interacts with the human cell surface glycoprotein GP1BA. Proteolytically cleaved by a metalloprotease. Post-translationally, both SSR1 and SSR2 domains are glycosylated. A truncated derivative (residues 1-2062) contains 105 nmol per nmol of protein, suggesting at least 10% of the apparent molecular weight is due to carbohydrates. Glucose and N-acetylglucosamine are present in a ratio of 30:73 residues per truncated polypeptide, as well as minor amounts of galactose and N-acetylgalactosamine. Glycosylation occurs intracellularly in the Ser-rich regions SSR1 and SSR2. Glycosylation of SSR2 domain may be required to prevent aggregation of GspB. It is probable that most of the Ser residues in SSR1 and SSR2 are O-GlcNAcylated. Sequential glycosylation by sugar transferases are able to generate complex sugar polymorphisms.

The protein localises to the secreted. It is found in the cell wall. Plays a role in virulence and host-pathogen interactions. Mediates binding to human platelets via interaction with the human cell surface glycoprotein GP1BA. Plays a positive role in biofilm formation, possibly by self-association via the basic region (BR). This Streptococcus gordonii protein is Platelet binding protein GspB (gspB).